A 515-amino-acid polypeptide reads, in one-letter code: C-glycoside 3-oxidase (515 aa).

FAD is bound at residue Glu41. Positions 62–82 (ERAHAQRRSEGPHAREDDDRV) are enriched in basic and acidic residues. The interval 62–90 (ERAHAQRRSEGPHAREDDDRVGGIVKSAQ) is disordered. The FAD site is built by Ser118, Asn120, Met124, Thr129, Ala131, and Val237. Residue His444 is the Proton acceptor of the active site. Residues Asn478 and Thr490 each coordinate FAD.

This sequence belongs to the GMC oxidoreductase family. In terms of assembly, monomer. The cofactor is FAD.

The catalysed reaction is isoorientin + O2 = 3''-dehydroisoorientin + H2O2. It carries out the reaction mangiferin + O2 = 3'-dehydromangiferin + H2O2. In terms of biological role, FAD-dependent C-glycoside-metabolizing enzyme that participates in the degradation of certain C-glycosides by catalyzing the oxidation of the hydroxyl group at the C3 position of the sugar moiety. Shows oxidase activity toward C-glycosides such as isoorientin and mangiferin but cannot use carminic acid, puerarin, orientin or aloesin. Shows weak activity (100 to 1000-fold lower) with O-glycosides. Probably plays a crucial role in the metabolism of C-glycosides in nature. The polypeptide is C-glycoside 3-oxidase (Microbacterium trichothecenolyticum (Aureobacterium trichothecenolyticum)).